Reading from the N-terminus, the 305-residue chain is Fumarylacetoacetate hydrolase domain-containing protein 2 homolog (305 aa).

A divalent metal cation-binding residues include glutamate 141, glutamate 143, and aspartate 172.

It belongs to the FAH family. Requires Ca(2+) as cofactor. Mg(2+) serves as cofactor.

Its function is as follows. May have hydrolase activity. The protein is Fumarylacetoacetate hydrolase domain-containing protein 2 homolog (fahd2) of Dictyostelium discoideum (Social amoeba).